Reading from the N-terminus, the 126-residue chain is 13 kDa ribonucleoprotein-associated protein (126 aa).

This sequence belongs to the eukaryotic ribosomal protein eL8 family. As to quaternary structure, component of the U3 snoRNP particle. Binds to the C'/D and B/C motifs in U3 snoRNA. Component of the 25S U4/U6.U5 tri-snRNP particle, a subcomplex of the spliceosome. Binds to the 5' stem-loop of U4 snRNA.

The protein resides in the nucleus. The protein localises to the nucleolus. Common component of the spliceosome and rRNA processing machinery. In association with the spliceosomal U4/U6.U5 tri-snRNP particle, required for splicing of pre-mRNA. In association with box C/D snoRNPs, required for processing of pre-ribosomal RNA (rRNA) and site-specific 2'-O-methylation of substrate RNAs. Essential for the accumulation and stability of U4 snRNA, U6 snRNA, and box C/D snoRNAs. The sequence is that of 13 kDa ribonucleoprotein-associated protein (SNU13) from Mycosarcoma maydis (Corn smut fungus).